Reading from the N-terminus, the 883-residue chain is DNA topoisomerase 1 (883 aa).

Positions 2–126 (PKLVIVESPT…TKRMVFHEIT (125 aa)) constitute a Toprim domain. Mg(2+)-binding residues include Glu8 and Asp95. Residues 141 to 583 (DQRLVHAQET…QFYRGDRGLE (443 aa)) form the Topo IA-type catalytic domain. The interaction with DNA stretch occupies residues 175 to 180 (SAGRVQ). The disordered stretch occupies residues 271–294 (SLEEKPTTRKPAPPFTTSTLQQES). Tyr320 acts as the O-(5'-phospho-DNA)-tyrosine intermediate in catalysis. Positions 842 to 883 (AKAGQAKAKGGRRSTGTPKSGETKARTTKTTKKTTTRRTTSR) are disordered. Over residues 867 to 883 (RTTKTTKKTTTRRTTSR) the composition is skewed to basic residues.

It belongs to the type IA topoisomerase family. As to quaternary structure, monomer. Mg(2+) is required as a cofactor.

It carries out the reaction ATP-independent breakage of single-stranded DNA, followed by passage and rejoining.. Releases the supercoiling and torsional tension of DNA, which is introduced during the DNA replication and transcription, by transiently cleaving and rejoining one strand of the DNA duplex. Introduces a single-strand break via transesterification at a target site in duplex DNA. The scissile phosphodiester is attacked by the catalytic tyrosine of the enzyme, resulting in the formation of a DNA-(5'-phosphotyrosyl)-enzyme intermediate and the expulsion of a 3'-OH DNA strand. The free DNA strand then undergoes passage around the unbroken strand, thus removing DNA supercoils. Finally, in the religation step, the DNA 3'-OH attacks the covalent intermediate to expel the active-site tyrosine and restore the DNA phosphodiester backbone. The chain is DNA topoisomerase 1 from Synechococcus elongatus (strain ATCC 33912 / PCC 7942 / FACHB-805) (Anacystis nidulans R2).